Here is a 303-residue protein sequence, read N- to C-terminus: uncharacterized protein (303 aa).

An S4 RNA-binding domain is found at 15 to 74 (ERIDKFLASTENDWSRTQVQQWVKDGQVVVNGSAVKANYKIQPGDQVTVTVPEPEALDVL). The active site involves D138.

Belongs to the pseudouridine synthase RluA family.

The catalysed reaction is a uridine in RNA = a pseudouridine in RNA. This is an uncharacterized protein from Bacillus subtilis (strain 168).